The sequence spans 241 residues: MKKLNLRQLKEHLYHGSLQDLDFSNLTSSAKAWLEREIKRIEEMKFYEKKLYEEGLNFIAGVDEAGRGPLVGPVVAACVILPKEIFIPEINDSKKLPEEKREKLAEVIKKEAISYGIGIVDCREIDEINILNATLKAMKKAIFEVKEKIEYLLVDAISIPDMPIKQLPIVKGDSKSISIAAASILAKVERDRIMREYHKLYPQYNFAKNKGYGTKEHIEALKKYGPCPIHRRTYVEKILKG.

Positions N57–G241 constitute an RNase H type-2 domain. Positions 63, 64, and 155 each coordinate a divalent metal cation.

This sequence belongs to the RNase HII family. Requires Mn(2+) as cofactor. Mg(2+) is required as a cofactor.

The protein localises to the cytoplasm. It catalyses the reaction Endonucleolytic cleavage to 5'-phosphomonoester.. In terms of biological role, endonuclease that specifically degrades the RNA of RNA-DNA hybrids. This is Ribonuclease HII from Caldanaerobacter subterraneus subsp. tengcongensis (strain DSM 15242 / JCM 11007 / NBRC 100824 / MB4) (Thermoanaerobacter tengcongensis).